A 24-amino-acid chain; its full sequence is GVLSNVIGYLKKLGTGALNAVLKQ.

The protein belongs to the gastrin/cholecystokinin family. Magainin subfamily. In terms of tissue distribution, is synthesized in the stomach and stored in a novel granular multinucleated cell in the gastric mucosa. It is stored as active, processed peptides in large granules within the granular gland secretions of the skin.

It is found in the secreted. Functionally, antimicrobial peptide. This Xenopus laevis (African clawed frog) protein is Antimicrobial peptide PGQ (pgq).